The primary structure comprises 336 residues: MPQDVDFHIPFPSRRSPDFERARADHLSWPRALGLIGTDAAAERHSRGGYADLAARFYPSATGADLDLGVDLMSWFFLFDDLFDGPRGEDPQETRKLTDAVAAALDGPLPTSAPPIAHGFADVWRRTCQGMSPAWRARSARHWRNYFSGYVDEAVSRHLNTPYDSAGHYLAMRRQTIGVQPTVDLAERSCHCEVPQRVFDSAVLFAMLQIATDTNLILNDIASLEKEEARGELNNMVFILMREHGWTRGRSIAHMQDGVRTRLEQFLLLEACLPKVYDTFELTAQERESAEKYRMDGVRSVIRGSYDWHRSSGRYAADYAIAASYQGYLEELGSTL.

Mg(2+) is bound by residues aspartate 80, aspartate 84, asparagine 219, serine 223, and glutamate 227. The short motif at 80-84 (DDLFD) is the DDXXD motif element.

Belongs to the terpene synthase family. In terms of assembly, monomer. Mg(2+) is required as a cofactor.

It carries out the reaction (2E,6E)-farnesyl diphosphate = pentalenene + diphosphate. The protein operates within antibiotic biosynthesis; neopentalenolactone biosynthesis. Its function is as follows. Catalyzes the cyclization of farnesyl diphosphate (FPP) to the tricyclic sesquiterpene pentalenene in the biosynthesis of neopentalenolactone antibiotic. The protein is Pentalenene synthase (ptlA) of Streptomyces avermitilis (strain ATCC 31267 / DSM 46492 / JCM 5070 / NBRC 14893 / NCIMB 12804 / NRRL 8165 / MA-4680).